Here is a 130-residue protein sequence, read N- to C-terminus: Small ribosomal subunit protein uS9 (130 aa).

This sequence belongs to the universal ribosomal protein uS9 family.

The chain is Small ribosomal subunit protein uS9 from Pseudomonas paraeruginosa (strain DSM 24068 / PA7) (Pseudomonas aeruginosa (strain PA7)).